Consider the following 331-residue polypeptide: Beta-ketoacyl-[acyl-carrier-protein] synthase III (331 aa).

Catalysis depends on residues Cys-113 and His-253. The ACP-binding stretch occupies residues 254–258 (QANTR). The active site involves Asn-283.

It belongs to the thiolase-like superfamily. FabH family. Homodimer.

Its subcellular location is the cytoplasm. The catalysed reaction is malonyl-[ACP] + acetyl-CoA + H(+) = 3-oxobutanoyl-[ACP] + CO2 + CoA. Its pathway is lipid metabolism; fatty acid biosynthesis. Its function is as follows. Catalyzes the condensation reaction of fatty acid synthesis by the addition to an acyl acceptor of two carbons from malonyl-ACP. Catalyzes the first condensation reaction which initiates fatty acid synthesis and may therefore play a role in governing the total rate of fatty acid production. Possesses both acetoacetyl-ACP synthase and acetyl transacylase activities. Its substrate specificity determines the biosynthesis of branched-chain and/or straight-chain of fatty acids. In Desulfitobacterium hafniense (strain DSM 10664 / DCB-2), this protein is Beta-ketoacyl-[acyl-carrier-protein] synthase III.